The primary structure comprises 100 residues: uncharacterized protein (100 aa).

This sequence belongs to the ycf15 family.

It localises to the plastid. The protein resides in the chloroplast. This is an uncharacterized protein from Panax ginseng (Korean ginseng).